Reading from the N-terminus, the 453-residue chain is Pre-mRNA-splicing factor prp46 (453 aa).

A compositionally biased stretch (low complexity) spans 62–71 (EKQAKAAAAG). The tract at residues 62-129 (EKQAKAAAAG…PSATRQQRPD (68 aa)) is disordered. WD repeat units follow at residues 142-181 (GHLG…LRLT), 184-223 (GHIS…VIRH), 226-265 (GHLS…NIHV), 268-309 (GHKG…GVLT), 311-350 (HKKG…QNFE), 351-389 (GHNA…KFQS), and 400-439 (DAEA…TPES). A disordered region spans residues 432-453 (DDEATPESHPVTWAPTLGRQRY).

It belongs to the WD repeat PRL1/PRL2 family. As to quaternary structure, associated with the spliceosome.

The protein resides in the cytoplasm. It localises to the nucleus. Functionally, involved in pre-mRNA splicing and required for cell cycle progression at G2/M. In Aspergillus fumigatus (strain ATCC MYA-4609 / CBS 101355 / FGSC A1100 / Af293) (Neosartorya fumigata), this protein is Pre-mRNA-splicing factor prp46 (prp46).